The following is a 449-amino-acid chain: Hyaluronidase-1 (449 aa).

The N-terminal stretch at 1 to 39 is a signal peptide; sequence MKPFSPEVSPDPCPATAAHLLRTYTLFLTLLELAQGCRG. Cystine bridges form between C58–C348 and C222–C236. Residues N85 and N114 are each glycosylated (N-linked (GlcNAc...) asparagine). E146 functions as the Proton donor in the catalytic mechanism. Residues N231, N252, and N365 are each glycosylated (N-linked (GlcNAc...) asparagine). 3 disulfides stabilise this stretch: C373/C384, C378/C433, and C435/C444. One can recognise an EGF-like domain in the interval 433-444; sequence CRCYRGWSGEWC.

This sequence belongs to the glycosyl hydrolase 56 family.

It is found in the secreted. The protein resides in the lysosome. The enzyme catalyses Random hydrolysis of (1-&gt;4)-linkages between N-acetyl-beta-D-glucosamine and D-glucuronate residues in hyaluronate.. May have a role in promoting tumor progression. May block the TGFB1-enhanced cell growth. Overexpression of HYAL1 suppressed the growth rate of colon carcinoma cell tumors in an experimental model. The chain is Hyaluronidase-1 (Hyal1) from Rattus norvegicus (Rat).